A 454-amino-acid chain; its full sequence is Enolase (454 aa).

Gln-167 contacts (2R)-2-phosphoglycerate. The active-site Proton donor is Glu-209. Residues Asp-250, Glu-312, and Asp-339 each coordinate Mg(2+). (2R)-2-phosphoglycerate is bound by residues Lys-364, Arg-393, Ser-394, and Lys-415. The active-site Proton acceptor is the Lys-364.

The protein belongs to the enolase family. Mg(2+) is required as a cofactor.

It localises to the cytoplasm. The protein resides in the secreted. It is found in the cell surface. It catalyses the reaction (2R)-2-phosphoglycerate = phosphoenolpyruvate + H2O. It functions in the pathway carbohydrate degradation; glycolysis; pyruvate from D-glyceraldehyde 3-phosphate: step 4/5. In terms of biological role, catalyzes the reversible conversion of 2-phosphoglycerate (2-PG) into phosphoenolpyruvate (PEP). It is essential for the degradation of carbohydrates via glycolysis. In Mycoplasmopsis agalactiae (strain NCTC 10123 / CIP 59.7 / PG2) (Mycoplasma agalactiae), this protein is Enolase.